A 209-amino-acid chain; its full sequence is Large ribosomal subunit protein uL3 (209 aa).

Positions 124-156 are disordered; sequence KRHNFSGGQRTHGQSDRQRAPGSVGGSSDPSRV.

This sequence belongs to the universal ribosomal protein uL3 family. Part of the 50S ribosomal subunit. Forms a cluster with proteins L14 and L19.

Its function is as follows. One of the primary rRNA binding proteins, it binds directly near the 3'-end of the 23S rRNA, where it nucleates assembly of the 50S subunit. The sequence is that of Large ribosomal subunit protein uL3 from Pelodictyon phaeoclathratiforme (strain DSM 5477 / BU-1).